Consider the following 117-residue polypeptide: Large ribosomal subunit protein uL24 (117 aa).

It belongs to the universal ribosomal protein uL24 family. In terms of assembly, part of the 50S ribosomal subunit.

Functionally, one of two assembly initiator proteins, it binds directly to the 5'-end of the 23S rRNA, where it nucleates assembly of the 50S subunit. Its function is as follows. One of the proteins that surrounds the polypeptide exit tunnel on the outside of the subunit. This chain is Large ribosomal subunit protein uL24, found in Nostoc punctiforme (strain ATCC 29133 / PCC 73102).